Consider the following 223-residue polypeptide: Small ribosomal subunit protein uS5 (223 aa).

Residues 1-66 (MPPQQQRGRG…AERAQAETEF (66 aa)) are disordered. The segment covering 13-22 (RGPGGPGGPG) has biased composition (gly residues). The segment covering 53-66 (GGDKAERAQAETEF) has biased composition (basic and acidic residues). Residues 66 to 129 (FQERVVQIRR…SDARKALIRV (64 aa)) form the S5 DRBM domain.

This sequence belongs to the universal ribosomal protein uS5 family. Part of the 30S ribosomal subunit. Contacts proteins S4 and S8.

With S4 and S12 plays an important role in translational accuracy. In terms of biological role, located at the back of the 30S subunit body where it stabilizes the conformation of the head with respect to the body. In Gloeobacter violaceus (strain ATCC 29082 / PCC 7421), this protein is Small ribosomal subunit protein uS5.